We begin with the raw amino-acid sequence, 147 residues long: Riboflavin kinase (147 aa).

Position 15-20 (15-20 (GLGEGR)) interacts with CDP. Residues Thr44 and Asn46 each contribute to the Mg(2+) site. Positions 97 and 104 each coordinate FMN. 109 to 112 (TELR) provides a ligand contact to CDP.

This sequence belongs to the archaeal riboflavin kinase family. Mg(2+) is required as a cofactor.

The enzyme catalyses riboflavin + CTP = CDP + FMN + H(+). It functions in the pathway cofactor biosynthesis; FMN biosynthesis; FMN from riboflavin (CTP route): step 1/1. Its function is as follows. Catalyzes the CTP-dependent phosphorylation of riboflavin (vitamin B2) to form flavin mononucleotide (FMN). In Methanopyrus kandleri (strain AV19 / DSM 6324 / JCM 9639 / NBRC 100938), this protein is Riboflavin kinase.